The chain runs to 104 residues: MAAKIRRDDEVIVLTGKDKGKRGKVKNVLSASKVIVEGINLVKKHQKPVPALNQPGGIVEKEAAIQVSNLAIFNAATGKADRVGFRFEDGKKVRFFKSNSETIK.

Belongs to the universal ribosomal protein uL24 family. Part of the 50S ribosomal subunit.

In terms of biological role, one of two assembly initiator proteins, it binds directly to the 5'-end of the 23S rRNA, where it nucleates assembly of the 50S subunit. Functionally, one of the proteins that surrounds the polypeptide exit tunnel on the outside of the subunit. This chain is Large ribosomal subunit protein uL24, found in Pectobacterium atrosepticum (strain SCRI 1043 / ATCC BAA-672) (Erwinia carotovora subsp. atroseptica).